Consider the following 223-residue polypeptide: ATP phosphoribosyltransferase (223 aa).

This sequence belongs to the ATP phosphoribosyltransferase family. Short subfamily. Heteromultimer composed of HisG and HisZ subunits.

The protein localises to the cytoplasm. It catalyses the reaction 1-(5-phospho-beta-D-ribosyl)-ATP + diphosphate = 5-phospho-alpha-D-ribose 1-diphosphate + ATP. Its pathway is amino-acid biosynthesis; L-histidine biosynthesis; L-histidine from 5-phospho-alpha-D-ribose 1-diphosphate: step 1/9. Functionally, catalyzes the condensation of ATP and 5-phosphoribose 1-diphosphate to form N'-(5'-phosphoribosyl)-ATP (PR-ATP). Has a crucial role in the pathway because the rate of histidine biosynthesis seems to be controlled primarily by regulation of HisG enzymatic activity. The polypeptide is ATP phosphoribosyltransferase (Bordetella pertussis (strain Tohama I / ATCC BAA-589 / NCTC 13251)).